Reading from the N-terminus, the 839-residue chain is Translation initiation factor IF-2 (839 aa).

2 stretches are compositionally biased toward basic and acidic residues: residues 1-12 (MSDNEIKNETPK) and 57-67 (AEAKAQEKQAA). 2 disordered regions span residues 1 to 21 (MSDNEIKNETPKKLSLQRRTK) and 57 to 244 (AEAK…GASL). Over residues 68–90 (EKAAQAQTEAKAQTEQACTTKKT) the composition is skewed to low complexity. 3 stretches are compositionally biased toward basic and acidic residues: residues 104 to 167 (PKTE…REET), 185 to 199 (READRDHDRRSEGNR), and 212 to 233 (GGREDDKNERNSDRRNAKDIKG). Residues 338-508 (TRAPVVTIMG…ILQSEVLELT (171 aa)) form the tr-type G domain. Positions 347-354 (GHVDHGKT) are G1. Residue 347 to 354 (GHVDHGKT) coordinates GTP. The tract at residues 372-376 (GITQH) is G2. The interval 394 to 397 (DTPG) is G3. GTP-binding positions include 394–398 (DTPGH) and 448–451 (NKID). The segment at 448–451 (NKID) is G4. The G5 stretch occupies residues 484–486 (SAK).

It belongs to the TRAFAC class translation factor GTPase superfamily. Classic translation factor GTPase family. IF-2 subfamily.

It localises to the cytoplasm. Its function is as follows. One of the essential components for the initiation of protein synthesis. Protects formylmethionyl-tRNA from spontaneous hydrolysis and promotes its binding to the 30S ribosomal subunits. Also involved in the hydrolysis of GTP during the formation of the 70S ribosomal complex. The chain is Translation initiation factor IF-2 from Haemophilus ducreyi (strain 35000HP / ATCC 700724).